The chain runs to 505 residues: tRNA-2-methylthio-N(6)-dimethylallyladenosine synthase (505 aa).

An MTTase N-terminal domain is found at 10-126 (RSYEVRTYGC…LPALLDRARH (117 aa)). 6 residues coordinate [4Fe-4S] cluster: Cys-19, Cys-55, Cys-89, Cys-163, Cys-167, and Cys-170. A Radical SAM core domain is found at 149 to 385 (RESAYAGWVS…IALQEQITLE (237 aa)). Residues 388 to 459 (QKLVGAEVEL…PHHLVADTPV (72 aa)) enclose the TRAM domain.

Belongs to the methylthiotransferase family. MiaB subfamily. Monomer. The cofactor is [4Fe-4S] cluster.

The protein resides in the cytoplasm. It carries out the reaction N(6)-dimethylallyladenosine(37) in tRNA + (sulfur carrier)-SH + AH2 + 2 S-adenosyl-L-methionine = 2-methylsulfanyl-N(6)-dimethylallyladenosine(37) in tRNA + (sulfur carrier)-H + 5'-deoxyadenosine + L-methionine + A + S-adenosyl-L-homocysteine + 2 H(+). Its function is as follows. Catalyzes the methylthiolation of N6-(dimethylallyl)adenosine (i(6)A), leading to the formation of 2-methylthio-N6-(dimethylallyl)adenosine (ms(2)i(6)A) at position 37 in tRNAs that read codons beginning with uridine. The sequence is that of tRNA-2-methylthio-N(6)-dimethylallyladenosine synthase from Rhodococcus jostii (strain RHA1).